Consider the following 342-residue polypeptide: Inositol-tetrakisphosphate 1-kinase 5 (342 aa).

Residues lysine 25 and lysine 67 each contribute to the 1D-myo-inositol 1,3,4-trisphosphate site. ATP-binding residues include arginine 102 and lysine 154. 2 residues coordinate 1D-myo-inositol 1,3,4-trisphosphate: histidine 165 and lysine 197. ATP is bound by residues glutamine 186–lysine 197 and serine 212. Positions 283, 298, and 300 each coordinate Mg(2+). Asparagine 300 contributes to the 1D-myo-inositol 1,3,4-trisphosphate binding site.

This sequence belongs to the ITPK1 family. As to quaternary structure, monomer. Requires Mg(2+) as cofactor. Expressed in roots, leaves, flowers, anthers and embryos.

It catalyses the reaction 1D-myo-inositol 3,4,5,6-tetrakisphosphate + ATP = 1D-myo-inositol 1,3,4,5,6-pentakisphosphate + ADP + H(+). The enzyme catalyses 1D-myo-inositol 1,3,4-trisphosphate + ATP = 1D-myo-inositol 1,3,4,5-tetrakisphosphate + ADP + H(+). The catalysed reaction is 1D-myo-inositol 1,3,4-trisphosphate + ATP = 1D-myo-inositol 1,3,4,6-tetrakisphosphate + ADP + H(+). Kinase that can phosphorylate various inositol polyphosphate such as Ins(3,4,5,6)P4 or Ins(1,3,4)P3 and participates in phytic acid biosynthesis in developing seeds. Phytic acid is the primary storage form of phosphorus in cereal grains and other plant seeds. In Oryza sativa subsp. japonica (Rice), this protein is Inositol-tetrakisphosphate 1-kinase 5 (ITPK5).